A 291-amino-acid chain; its full sequence is Nucleotide-binding protein Lm4b_02443 (291 aa).

An ATP-binding site is contributed by 13-20 (GMSGAGKT). 63–66 (DLRG) provides a ligand contact to GTP.

Belongs to the RapZ-like family.

Functionally, displays ATPase and GTPase activities. This chain is Nucleotide-binding protein Lm4b_02443, found in Listeria monocytogenes serotype 4b (strain CLIP80459).